The following is a 164-amino-acid chain: NADH-quinone oxidoreductase subunit I (164 aa).

2 consecutive 4Fe-4S ferredoxin-type domains span residues 55-85 (LRRY…IDAE) and 95-124 (TRYD…EGPN). Cys65, Cys68, Cys71, Cys75, Cys104, Cys107, Cys110, and Cys114 together coordinate [4Fe-4S] cluster.

This sequence belongs to the complex I 23 kDa subunit family. NDH-1 is composed of 14 different subunits. Subunits NuoA, H, J, K, L, M, N constitute the membrane sector of the complex. The cofactor is [4Fe-4S] cluster.

Its subcellular location is the cell inner membrane. The catalysed reaction is a quinone + NADH + 5 H(+)(in) = a quinol + NAD(+) + 4 H(+)(out). Its function is as follows. NDH-1 shuttles electrons from NADH, via FMN and iron-sulfur (Fe-S) centers, to quinones in the respiratory chain. The immediate electron acceptor for the enzyme in this species is believed to be ubiquinone. Couples the redox reaction to proton translocation (for every two electrons transferred, four hydrogen ions are translocated across the cytoplasmic membrane), and thus conserves the redox energy in a proton gradient. The sequence is that of NADH-quinone oxidoreductase subunit I from Dinoroseobacter shibae (strain DSM 16493 / NCIMB 14021 / DFL 12).